We begin with the raw amino-acid sequence, 1255 residues long: DNA-directed RNA polymerase subunit beta' (1255 aa).

Zn(2+) is bound by residues Cys-68, Cys-70, Cys-83, and Cys-86. The Mg(2+) site is built by Asp-457, Asp-459, and Asp-461. Zn(2+) is bound by residues Cys-803, Cys-885, Cys-892, and Cys-895. A compositionally biased stretch (acidic residues) spans 1220–1240 (NSDEEVSFTEDEYFEDEENDL). Residues 1220 to 1255 (NSDEEVSFTEDEYFEDEENDLSTENFDDLKFSEEEE) are disordered. Positions 1246–1255 (DDLKFSEEEE) are enriched in basic and acidic residues.

The protein belongs to the RNA polymerase beta' chain family. The RNAP catalytic core consists of 2 alpha, 1 beta, 1 beta' and 1 omega subunit. When a sigma factor is associated with the core the holoenzyme is formed, which can initiate transcription. Mg(2+) is required as a cofactor. The cofactor is Zn(2+).

The catalysed reaction is RNA(n) + a ribonucleoside 5'-triphosphate = RNA(n+1) + diphosphate. In terms of biological role, DNA-dependent RNA polymerase catalyzes the transcription of DNA into RNA using the four ribonucleoside triphosphates as substrates. This is DNA-directed RNA polymerase subunit beta' from Lachnoclostridium phytofermentans (strain ATCC 700394 / DSM 18823 / ISDg) (Clostridium phytofermentans).